The primary structure comprises 89 residues: Small ribosomal subunit protein uS15 (89 aa).

This sequence belongs to the universal ribosomal protein uS15 family. In terms of assembly, part of the 30S ribosomal subunit. Forms a bridge to the 50S subunit in the 70S ribosome, contacting the 23S rRNA.

Functionally, one of the primary rRNA binding proteins, it binds directly to 16S rRNA where it helps nucleate assembly of the platform of the 30S subunit by binding and bridging several RNA helices of the 16S rRNA. In terms of biological role, forms an intersubunit bridge (bridge B4) with the 23S rRNA of the 50S subunit in the ribosome. This Paramagnetospirillum magneticum (strain ATCC 700264 / AMB-1) (Magnetospirillum magneticum) protein is Small ribosomal subunit protein uS15.